Consider the following 1071-residue polypeptide: Methionine S-methyltransferase (1071 aa).

A2 is subject to N-acetylalanine.

It belongs to the class I-like SAM-binding methyltransferase superfamily. Homotetramer. As to expression, expressed in roots, rosette leaves and cauline leaves. Expressed at a lower level in developing seeds.

The protein localises to the cytoplasm. The enzyme catalyses L-methionine + S-adenosyl-L-methionine = S-methyl-L-methionine + S-adenosyl-L-homocysteine. In terms of biological role, catalyzes the S-methylmethionine (SMM) biosynthesis from adenosyl-L-homocysteine (AdoMet) and methionine. SMM biosynthesis (by MMT1) and degradation (by HMT-1, HMT-2 and HMT-3) constitute the SMM cycle in plants, which is probably required to achieve short term control of AdoMet level. Also able to catalyze the selenium-methylmethionine (SeMM) from AdoMet and selenium-methionine (SeMet). May play a role in phoem sulfur transport; such function is however not essential. The chain is Methionine S-methyltransferase (MMT1) from Arabidopsis thaliana (Mouse-ear cress).